We begin with the raw amino-acid sequence, 190 residues long: ADP-ribosylation factor F (190 aa).

Residues 34-40 (DGAGKST), 75-79 (DIGGQ), and 136-139 (NKQD) contribute to the GTP site.

It belongs to the small GTPase superfamily. Arf family.

The protein localises to the golgi apparatus. In terms of biological role, GTP-binding protein that may be involved in protein trafficking. May modulate vesicle budding and uncoating within the Golgi apparatus. This chain is ADP-ribosylation factor F (arrF), found in Dictyostelium discoideum (Social amoeba).